Here is a 492-residue protein sequence, read N- to C-terminus: Putative cytochrome P450 136 (492 aa).

A heme-binding site is contributed by Cys-439.

It belongs to the cytochrome P450 family. It depends on heme as a cofactor.

The sequence is that of Putative cytochrome P450 136 (cyp136) from Mycobacterium tuberculosis (strain CDC 1551 / Oshkosh).